Consider the following 176-residue polypeptide: Protein GrpE (176 aa).

Belongs to the GrpE family. In terms of assembly, homodimer.

It localises to the cytoplasm. Functionally, participates actively in the response to hyperosmotic and heat shock by preventing the aggregation of stress-denatured proteins, in association with DnaK and GrpE. It is the nucleotide exchange factor for DnaK and may function as a thermosensor. Unfolded proteins bind initially to DnaJ; upon interaction with the DnaJ-bound protein, DnaK hydrolyzes its bound ATP, resulting in the formation of a stable complex. GrpE releases ADP from DnaK; ATP binding to DnaK triggers the release of the substrate protein, thus completing the reaction cycle. Several rounds of ATP-dependent interactions between DnaJ, DnaK and GrpE are required for fully efficient folding. The polypeptide is Protein GrpE (Thermoplasma volcanium (strain ATCC 51530 / DSM 4299 / JCM 9571 / NBRC 15438 / GSS1)).